We begin with the raw amino-acid sequence, 39 residues long: Colipase (39 aa).

Cystine bridges form between Cys-16–Cys-27 and Cys-22–Cys-38.

This sequence belongs to the colipase family. Forms a 1:1 stoichiometric complex with pancreatic lipase. In terms of tissue distribution, expressed by the pancreas.

Its subcellular location is the secreted. Functionally, colipase is a cofactor of pancreatic lipase. It allows the lipase to anchor itself to the lipid-water interface. Without colipase the enzyme is washed off by bile salts, which have an inhibitory effect on the lipase. This Squalus acanthias (Spiny dogfish) protein is Colipase.